Here is a 305-residue protein sequence, read N- to C-terminus: Succinate--CoA ligase [ADP-forming] subunit alpha (305 aa).

CoA is bound by residues 17-20, Lys-43, and 96-98; these read TGKE and ITE. Position 161 (Tyr-161) interacts with substrate. Catalysis depends on His-249, which acts as the Tele-phosphohistidine intermediate.

It belongs to the succinate/malate CoA ligase alpha subunit family. Heterotetramer of two alpha and two beta subunits.

It catalyses the reaction succinate + ATP + CoA = succinyl-CoA + ADP + phosphate. The enzyme catalyses GTP + succinate + CoA = succinyl-CoA + GDP + phosphate. Its pathway is carbohydrate metabolism; tricarboxylic acid cycle; succinate from succinyl-CoA (ligase route): step 1/1. Functionally, succinyl-CoA synthetase functions in the citric acid cycle (TCA), coupling the hydrolysis of succinyl-CoA to the synthesis of either ATP or GTP and thus represents the only step of substrate-level phosphorylation in the TCA. The alpha subunit of the enzyme binds the substrates coenzyme A and phosphate, while succinate binding and nucleotide specificity is provided by the beta subunit. In Aquifex aeolicus (strain VF5), this protein is Succinate--CoA ligase [ADP-forming] subunit alpha.